Here is a 501-residue protein sequence, read N- to C-terminus: UPF0288 protein Maeo_0995 (501 aa).

This sequence belongs to the UPF0288 family.

The protein is UPF0288 protein Maeo_0995 of Methanococcus aeolicus (strain ATCC BAA-1280 / DSM 17508 / OCM 812 / Nankai-3).